Reading from the N-terminus, the 544-residue chain is CTP synthase (544 aa).

An amidoligase domain region spans residues 1-265 (MTQYIFITGG…DDLVVKHFGL (265 aa)). Residue serine 13 coordinates CTP. UTP is bound at residue serine 13. Residues 14–19 (SLGKGI) and aspartate 71 contribute to the ATP site. The Mg(2+) site is built by aspartate 71 and glutamate 139. CTP is bound by residues 146-148 (DIE), 186-191 (KTKPTQ), and lysine 222. UTP is bound by residues 186–191 (KTKPTQ) and lysine 222. The region spanning 290 to 541 (TVAMVGKYVN…IAAALDYQTE (252 aa)) is the Glutamine amidotransferase type-1 domain. Residue glycine 351 participates in L-glutamine binding. Cysteine 378 acts as the Nucleophile; for glutamine hydrolysis in catalysis. L-glutamine-binding positions include 379-382 (LGLQ), glutamate 402, and arginine 469. Catalysis depends on residues histidine 514 and glutamate 516.

Belongs to the CTP synthase family. Homotetramer.

It catalyses the reaction UTP + L-glutamine + ATP + H2O = CTP + L-glutamate + ADP + phosphate + 2 H(+). It carries out the reaction L-glutamine + H2O = L-glutamate + NH4(+). The catalysed reaction is UTP + NH4(+) + ATP = CTP + ADP + phosphate + 2 H(+). It participates in pyrimidine metabolism; CTP biosynthesis via de novo pathway; CTP from UDP: step 2/2. Its activity is regulated as follows. Allosterically activated by GTP, when glutamine is the substrate; GTP has no effect on the reaction when ammonia is the substrate. The allosteric effector GTP functions by stabilizing the protein conformation that binds the tetrahedral intermediate(s) formed during glutamine hydrolysis. Inhibited by the product CTP, via allosteric rather than competitive inhibition. Functionally, catalyzes the ATP-dependent amination of UTP to CTP with either L-glutamine or ammonia as the source of nitrogen. Regulates intracellular CTP levels through interactions with the four ribonucleotide triphosphates. This chain is CTP synthase, found in Dichelobacter nodosus (strain VCS1703A).